The sequence spans 371 residues: D-alanine--D-alanine ligase (371 aa).

The ATP-grasp domain maps to 154 to 361; the sequence is KKLLVAEGLP…YPTLLAAMVD (208 aa). ATP is bound at residue 182-237; sequence RERLGLPVFVKPARGGSSIGVSRVSDWAELPAAIEAARRHDPKVIVEAGIAGRELE. Positions 316, 328, and 330 each coordinate Mg(2+).

It belongs to the D-alanine--D-alanine ligase family. It depends on Mg(2+) as a cofactor. Requires Mn(2+) as cofactor.

The protein resides in the cytoplasm. It catalyses the reaction 2 D-alanine + ATP = D-alanyl-D-alanine + ADP + phosphate + H(+). The protein operates within cell wall biogenesis; peptidoglycan biosynthesis. Its function is as follows. Cell wall formation. This chain is D-alanine--D-alanine ligase, found in Mycobacterium sp. (strain KMS).